A 253-amino-acid chain; its full sequence is Triosephosphate isomerase (253 aa).

9-11 provides a ligand contact to substrate; sequence NWK. His-97 functions as the Electrophile in the catalytic mechanism. The active-site Proton acceptor is Glu-169. Residues Gly-175, Ser-215, and 236–237 each bind substrate; that span reads GG.

It belongs to the triosephosphate isomerase family. Homodimer.

It is found in the cytoplasm. It catalyses the reaction D-glyceraldehyde 3-phosphate = dihydroxyacetone phosphate. Its pathway is carbohydrate biosynthesis; gluconeogenesis. The protein operates within carbohydrate degradation; glycolysis; D-glyceraldehyde 3-phosphate from glycerone phosphate: step 1/1. Involved in the gluconeogenesis. Catalyzes stereospecifically the conversion of dihydroxyacetone phosphate (DHAP) to D-glyceraldehyde-3-phosphate (G3P). The sequence is that of Triosephosphate isomerase from Staphylococcus epidermidis (strain ATCC 35984 / DSM 28319 / BCRC 17069 / CCUG 31568 / BM 3577 / RP62A).